The primary structure comprises 115 residues: Nucleoid-associated protein Ava_2322 (115 aa).

The protein belongs to the YbaB/EbfC family. As to quaternary structure, homodimer.

The protein resides in the cytoplasm. It localises to the nucleoid. Its function is as follows. Binds to DNA and alters its conformation. May be involved in regulation of gene expression, nucleoid organization and DNA protection. The sequence is that of Nucleoid-associated protein Ava_2322 from Trichormus variabilis (strain ATCC 29413 / PCC 7937) (Anabaena variabilis).